The sequence spans 411 residues: Phosphoglycerate kinase (411 aa).

Substrate-binding positions include 19 to 21 (DLN), Arg-34, 57 to 60 (HQSR), Arg-114, and Arg-154. ATP-binding positions include Glu-332 and 358–361 (GGHS).

It belongs to the phosphoglycerate kinase family. As to quaternary structure, monomer.

Its subcellular location is the cytoplasm. It carries out the reaction (2R)-3-phosphoglycerate + ATP = (2R)-3-phospho-glyceroyl phosphate + ADP. It functions in the pathway carbohydrate degradation; glycolysis; pyruvate from D-glyceraldehyde 3-phosphate: step 2/5. The protein is Phosphoglycerate kinase of Thermococcus kodakarensis (strain ATCC BAA-918 / JCM 12380 / KOD1) (Pyrococcus kodakaraensis (strain KOD1)).